The chain runs to 142 residues: Large ribosomal subunit protein uL13 (142 aa).

The protein belongs to the universal ribosomal protein uL13 family. Part of the 50S ribosomal subunit.

This protein is one of the early assembly proteins of the 50S ribosomal subunit, although it is not seen to bind rRNA by itself. It is important during the early stages of 50S assembly. The chain is Large ribosomal subunit protein uL13 from Desulfotalea psychrophila (strain LSv54 / DSM 12343).